The sequence spans 604 residues: Protein hemingway (604 aa).

4 disordered regions span residues 1 to 70, 103 to 309, 359 to 387, and 544 to 585; these read MSGA…GNPH, NQLS…PTSQ, SDRRGDTESEMSSMTETTMTSARSLGGGI, and TIKA…IDLD. Composition is skewed to acidic residues over residues 8–38, 135–183, 194–214, and 288–300; these read SDEESYGEESFEEDSESEVEVEEEEIEYIEP, EDEA…DDAQ, DDSDEEEGTDVEVEQLEEDEP, and EEPEEPEQPEENQ. The segment covering 368–379 has biased composition (low complexity); it reads EMSSMTETTMTS.

It belongs to the CFAP97 family. As to expression, detected in ciliated sensory neurons at all stages of development, and in adult testis.

It localises to the cell projection. The protein resides in the cilium. It is found in the perikaryon. Its subcellular location is the cytoplasm. Its function is as follows. Involved in assembly and/or maintenance of motile cilia. Required during spermatogenesis for axoneme elongation. Necessary for optimal function of the chordotonal (hearing) organs. This is Protein hemingway from Drosophila melanogaster (Fruit fly).